The sequence spans 354 residues: Virulence plasmid protein pGP2-D (354 aa).

The polypeptide is Virulence plasmid protein pGP2-D (Chlamydia trachomatis serovar L2 (strain ATCC VR-902B / DSM 19102 / 434/Bu)).